The sequence spans 127 residues: Large ribosomal subunit protein bL21 (127 aa).

A disordered region spans residues threonine 102 to glutamate 127.

It belongs to the bacterial ribosomal protein bL21 family. In terms of assembly, part of the 50S ribosomal subunit. Contacts protein L20.

This protein binds to 23S rRNA in the presence of protein L20. In Bradyrhizobium sp. (strain BTAi1 / ATCC BAA-1182), this protein is Large ribosomal subunit protein bL21.